A 264-amino-acid chain; its full sequence is Proteasome assembly chaperone 2 (264 aa).

Threonine 137 carries the phosphothreonine modification.

Belongs to the PSMG2 family. In terms of assembly, forms a heterodimer with PSMG1. The PSMG1-PSMG2 heterodimer interacts directly with the PSMA5 and PSMA7 proteasome alpha subunits. In terms of processing, degraded by the proteasome upon completion of 20S proteasome maturation.

The protein resides in the nucleus. Its function is as follows. Chaperone protein which promotes assembly of the 20S proteasome as part of a heterodimer with PSMG1. The PSMG1-PSMG2 heterodimer binds to the PSMA5 and PSMA7 proteasome subunits, promotes assembly of the proteasome alpha subunits into the heteroheptameric alpha ring and prevents alpha ring dimerization. In Bos taurus (Bovine), this protein is Proteasome assembly chaperone 2.